The primary structure comprises 275 residues: Large ribosomal subunit protein uL2c (275 aa).

2 disordered regions span residues 1–30 (MAIH…QKQK) and 225–275 (MNPV…RRRK). Residues 21–30 (QAKSTPQKQK) show a composition bias toward polar residues.

Belongs to the universal ribosomal protein uL2 family. Part of the 50S ribosomal subunit.

The protein localises to the plastid. The protein resides in the chloroplast. This Illicium oligandrum (Star anise) protein is Large ribosomal subunit protein uL2c (rpl2).